The sequence spans 337 residues: Phosphate acyltransferase (337 aa).

The protein belongs to the PlsX family. Homodimer. Probably interacts with PlsY.

Its subcellular location is the cytoplasm. It catalyses the reaction a fatty acyl-[ACP] + phosphate = an acyl phosphate + holo-[ACP]. It functions in the pathway lipid metabolism; phospholipid metabolism. In terms of biological role, catalyzes the reversible formation of acyl-phosphate (acyl-PO(4)) from acyl-[acyl-carrier-protein] (acyl-ACP). This enzyme utilizes acyl-ACP as fatty acyl donor, but not acyl-CoA. In Aromatoleum aromaticum (strain DSM 19018 / LMG 30748 / EbN1) (Azoarcus sp. (strain EbN1)), this protein is Phosphate acyltransferase.